The sequence spans 256 residues: Small ribosomal subunit protein uS2 (256 aa).

Belongs to the universal ribosomal protein uS2 family.

The chain is Small ribosomal subunit protein uS2 from Brucella anthropi (strain ATCC 49188 / DSM 6882 / CCUG 24695 / JCM 21032 / LMG 3331 / NBRC 15819 / NCTC 12168 / Alc 37) (Ochrobactrum anthropi).